The primary structure comprises 267 residues: 3-methyl-2-oxobutanoate hydroxymethyltransferase (267 aa).

The Mg(2+) site is built by D45 and D84. 3-methyl-2-oxobutanoate contacts are provided by residues D45–S46, D84, and K113. Residue E115 participates in Mg(2+) binding. Catalysis depends on E182, which acts as the Proton acceptor.

Belongs to the PanB family. Homodecamer; pentamer of dimers. It depends on Mg(2+) as a cofactor.

Its subcellular location is the cytoplasm. The enzyme catalyses 3-methyl-2-oxobutanoate + (6R)-5,10-methylene-5,6,7,8-tetrahydrofolate + H2O = 2-dehydropantoate + (6S)-5,6,7,8-tetrahydrofolate. It functions in the pathway cofactor biosynthesis; coenzyme A biosynthesis. Catalyzes the reversible reaction in which hydroxymethyl group from 5,10-methylenetetrahydrofolate is transferred onto alpha-ketoisovalerate to form ketopantoate. This is 3-methyl-2-oxobutanoate hydroxymethyltransferase from Saccharolobus islandicus (strain Y.G.57.14 / Yellowstone #1) (Sulfolobus islandicus).